The sequence spans 98 residues: Large ribosomal subunit protein eL30 (98 aa).

It belongs to the eukaryotic ribosomal protein eL30 family.

This Methanosphaera stadtmanae (strain ATCC 43021 / DSM 3091 / JCM 11832 / MCB-3) protein is Large ribosomal subunit protein eL30.